A 420-amino-acid chain; its full sequence is Glutamyl-tRNA reductase (420 aa).

Substrate-binding positions include 49-52 (TCNR), serine 109, 114-116 (EPQ), and glutamine 120. Cysteine 50 serves as the catalytic Nucleophile. An NADP(+)-binding site is contributed by 189-194 (GAGETI).

It belongs to the glutamyl-tRNA reductase family. Homodimer.

The enzyme catalyses (S)-4-amino-5-oxopentanoate + tRNA(Glu) + NADP(+) = L-glutamyl-tRNA(Glu) + NADPH + H(+). It participates in porphyrin-containing compound metabolism; protoporphyrin-IX biosynthesis; 5-aminolevulinate from L-glutamyl-tRNA(Glu): step 1/2. Its function is as follows. Catalyzes the NADPH-dependent reduction of glutamyl-tRNA(Glu) to glutamate 1-semialdehyde (GSA). The sequence is that of Glutamyl-tRNA reductase from Sodalis glossinidius (strain morsitans).